The primary structure comprises 293 residues: GTPase Era (293 aa).

Positions 2–168 (KILFSTIIGR…INEIKKYSYE (167 aa)) constitute an Era-type G domain. The segment at 10-17 (GRPNVGKS) is G1. 10 to 17 (GRPNVGKS) contributes to the GTP binding site. Residues 36 to 40 (QATRD) are G2. Residues 57-60 (DTPG) are G3. Residues 57–61 (DTPGI) and 118–121 (TKID) contribute to the GTP site. Residues 118–121 (TKID) are G4. The G5 stretch occupies residues 147–149 (ISS). The KH type-2 domain maps to 199 to 279 (LEQELPHSIL…KLFLKIKVKK (81 aa)).

Belongs to the TRAFAC class TrmE-Era-EngA-EngB-Septin-like GTPase superfamily. Era GTPase family. As to quaternary structure, monomer.

The protein resides in the cytoplasm. The protein localises to the cell membrane. In terms of biological role, an essential GTPase that binds both GDP and GTP, with rapid nucleotide exchange. Plays a role in 16S rRNA processing and 30S ribosomal subunit biogenesis and possibly also in cell cycle regulation and energy metabolism. This chain is GTPase Era, found in Mycoplasmopsis pulmonis (strain UAB CTIP) (Mycoplasma pulmonis).